A 319-amino-acid polypeptide reads, in one-letter code: Oxaloacetate tautomerase fahd2, mitochondrial (319 aa).

The transit peptide at 1-31 directs the protein to the mitochondrion; sequence MLTQTRVALRVLKNAHLTLPKRNISQSPALS. Positions 164, 166, and 195 each coordinate Mg(2+).

The protein belongs to the FAH family. Mg(2+) serves as cofactor. Mn(2+) is required as a cofactor.

The protein resides in the mitochondrion. It carries out the reaction oxaloacetate = enol-oxaloacetate. Tautomerase that converts enol-oxaloacetate, a strong inhibitor of succinate dehydrogenase, to the physiological keto form of oxaloacetate. It is thereby required to maximize aerobic respiration efficiency by preventing succinate dehydrogenase inhibition. In Xenopus laevis (African clawed frog), this protein is Oxaloacetate tautomerase fahd2, mitochondrial (fahd2).